A 1183-amino-acid chain; its full sequence is Atrophin-1 (1183 aa).

Disordered regions lie at residues Met1–Ser603, Ser617–Asn760, and Leu780–Pro855. Positions Arg16–Arg32 match the Nuclear localization signal motif. The span at Lys17–Ser29 shows a compositional bias: basic and acidic residues. The residue at position 34 (Ser34) is a Phosphoserine. Residues Gly45–Ser63 are compositionally biased toward basic and acidic residues. A phosphoserine mark is found at Ser77, Ser79, Ser100, Ser102, and Ser106. Over residues Leu107–Asn127 the composition is skewed to basic and acidic residues. The segment covering Arg128–Ser151 has biased composition (polar residues). Composition is skewed to pro residues over residues Pro157–Ser173 and Gly207–Gln218. Positions Ile261–Pro272 are enriched in low complexity. Positions Pro344 to Arg373 are enriched in pro residues. Residues Ser377–Ser400 are compositionally biased toward low complexity. Polar residues predominate over residues Ser415–Trp436. Positions His510 to Pro560 are involved in binding BAIAP2. Low complexity predominate over residues Ser562–Ser584. Residue Ser625 is modified to Phosphoserine. Lys634 is modified (N6-acetyllysine). Phosphothreonine is present on Thr646. Phosphoserine is present on Ser654. Thr662 carries the post-translational modification Phosphothreonine. Pro residues-rich tracts occupy residues Leu701 to Gly711 and Ser732 to Lys745. Ser732 carries the phosphoserine; by MAPK8 modification. Ser739 and Ser741 each carry phosphoserine. Residues Lys788–Val832 show a composition bias toward basic and acidic residues. The required for interaction with FAT1 stretch occupies residues Asp872–Val887. Ser889 carries the phosphoserine modification. The tract at residues Pro921–Lys940 is disordered. A compositionally biased stretch (basic and acidic residues) spans Ala922 to Lys940. Residues Ala1026 to Arg1034 carry the Nuclear export signal motif. Arg1108 is subject to Asymmetric dimethylarginine. Lys1176 is covalently cross-linked (Glycyl lysine isopeptide (Lys-Gly) (interchain with G-Cter in SUMO2)).

In terms of assembly, interacts with NR2E1; the interaction represses the transcriptional activity of NR2E1. Interact (via its N-terminus) with FAT1 (via a C-terminal domain). Interacts with BAIAP2, WWP1, WWP2, WWP3 and RERE. Interacts (via its N-terminus) with MTG8; the interaction enhances transcriptional repression of MTG8. Interacts with PQBP1. Post-translationally, phosphorylated in vitro by MAPK8/JNK1 on Ser-732. As to expression, predominant neuronal expression, Expressed in most brain regions including striatum, hippocampus, cerebral cortex, diencephalon, brain stem and cerebellum. Highest levels in cerebellum. Also highly expressed in kidney and testis, low expression in skeletal muscle and heart.

Its subcellular location is the nucleus. The protein resides in the cytoplasm. It is found in the perinuclear region. It localises to the cell junction. In terms of biological role, transcriptional corepressor. Recruits NR2E1 to repress transcription. Promotes vascular smooth cell (VSMC) migration and orientation. Corepressor of MTG8 transcriptional repression. Has some intrinsic repression activity. The protein is Atrophin-1 (Atn1) of Rattus norvegicus (Rat).